A 422-amino-acid polypeptide reads, in one-letter code: UDP-N-acetylglucosamine 1-carboxyvinyltransferase (422 aa).

22–23 (KN) is a phosphoenolpyruvate binding site. Residue arginine 93 coordinates UDP-N-acetyl-alpha-D-glucosamine. Cysteine 117 serves as the catalytic Proton donor. A 2-(S-cysteinyl)pyruvic acid O-phosphothioketal modification is found at cysteine 117. Residues 122-126 (RPVDQ), aspartate 305, and isoleucine 327 each bind UDP-N-acetyl-alpha-D-glucosamine.

It belongs to the EPSP synthase family. MurA subfamily.

It is found in the cytoplasm. It catalyses the reaction phosphoenolpyruvate + UDP-N-acetyl-alpha-D-glucosamine = UDP-N-acetyl-3-O-(1-carboxyvinyl)-alpha-D-glucosamine + phosphate. It functions in the pathway cell wall biogenesis; peptidoglycan biosynthesis. Its function is as follows. Cell wall formation. Adds enolpyruvyl to UDP-N-acetylglucosamine. The sequence is that of UDP-N-acetylglucosamine 1-carboxyvinyltransferase from Bordetella parapertussis (strain 12822 / ATCC BAA-587 / NCTC 13253).